Reading from the N-terminus, the 1135-residue chain is Exportin-6-A (1135 aa).

The region spanning 31 to 97 (IESLLNNFAQ…RNSLPKLLLS (67 aa)) is the Importin N-terminal domain.

Belongs to the exportin family. Expressed during meiotic maturation 2 hours after germinal vesicle break down (GVBD) and in unfertilized and fertilized eggs, but not in oocytes (at protein level). Expressed in somatic cells, in oocytes, during meiotic maturation and in unfertilized and fertilized eggs.

It is found in the nucleus. The protein resides in the cytoplasm. Its function is as follows. Mediates the nuclear export of actin and profilin-actin complexes in somatic cells. Oocyte nuclei lack active actin export. This is Exportin-6-A (xpo6-a) from Xenopus laevis (African clawed frog).